The chain runs to 160 residues: Ribosome maturation factor RimP (160 aa).

This sequence belongs to the RimP family.

It localises to the cytoplasm. Functionally, required for maturation of 30S ribosomal subunits. This Symbiobacterium thermophilum (strain DSM 24528 / JCM 14929 / IAM 14863 / T) protein is Ribosome maturation factor RimP.